The following is a 402-amino-acid chain: Endoplasmic reticulum junction formation protein lunapark-B (402 aa).

The Cytoplasmic portion of the chain corresponds to 1 to 45; that stretch reads MGAIISRWKTKPSTVELLESLDKDIKDLEEFRAKNQRLLKLWVGR. The helical transmembrane segment at 46 to 66 threads the bilayer; that stretch reads LLFYSSALYLLTCLCVYYLYF. The Lumenal portion of the chain corresponds to 67-77; it reads PQQWGARLITA. The helical transmembrane segment at 78–98 threads the bilayer; the sequence is LPLLAFPALVLLLRKMLIFLF. The Cytoplasmic portion of the chain corresponds to 99-402; it reads SKRTERNNDK…EEQKKEDESN (304 aa). Residues 100–128 are a coiled coil; the sequence is KRTERNNDKLEDLKTQKRKILEEVMETET. The tract at residues 142–240 is disordered; that stretch reads ESKKKAEAEA…PGPGSGMRPP (99 aa). The segment covering 205–222 has biased composition (polar residues); the sequence is SASTPAGASQAETPQQMM. The segment at 276 to 301 adopts a C4-type; plays a role in ER morphology zinc-finger fold; it reads CQQCFSHNGMALKEEFEFVAFRCAYC. The tract at residues 311–402 is disordered; sequence RPQAPRLPEF…EEQKKEDESN (92 aa). A compositionally biased stretch (basic and acidic residues) spans 321 to 330; it reads SFERRLRSES. A compositionally biased stretch (acidic residues) spans 341-352; it reads TPEDSDAPEDDM. A compositionally biased stretch (basic and acidic residues) spans 385 to 402; the sequence is PHAEAEALEEQKKEDESN.

Belongs to the lunapark family. In terms of assembly, homodimer; homodimerization requires the C4-type zinc finger motif and decreases during mitosis in a phosphorylation-dependent manner. Phosphorylated. Phosphorylation occurs during interphase. Phosphorylation also occurs during mitosis; these phosphorylations reduce both its homodimerization and the ER three-way tubular junction formation.

Its subcellular location is the endoplasmic reticulum membrane. In terms of biological role, endoplasmic reticulum (ER)-shaping membrane protein that plays a role in determining ER morphology. Involved in the stabilization of nascent three-way ER tubular junctions within the ER network. May also play a role as a curvature-stabilizing protein within three-way ER tubular junction network. The polypeptide is Endoplasmic reticulum junction formation protein lunapark-B (lnpkb) (Danio rerio (Zebrafish)).